Reading from the N-terminus, the 137-residue chain is Large ribosomal subunit protein uL16c (137 aa).

Residues 1-21 (MLSPKKTKYRKQHRGRMKGKA) form a disordered region.

It belongs to the universal ribosomal protein uL16 family. In terms of assembly, part of the 50S ribosomal subunit.

Its subcellular location is the plastid. The protein resides in the chloroplast. The protein is Large ribosomal subunit protein uL16c of Oedogonium cardiacum (Filamentous green alga).